The primary structure comprises 565 residues: 13S globulin seed storage protein 1 (565 aa).

The first 20 residues, 1–20, serve as a signal peptide directing secretion; the sequence is MSTKLILSFSLCLMVLSCSA. Disulfide bonds link cysteine 44–cysteine 77 and cysteine 120–cysteine 384. The region spanning 49–331 is the Cupin type-1 1 domain; that stretch reads LTASEPSRRV…FRNVDQETIS (283 aa). Disordered regions lie at residues 126 to 224, 271 to 301, and 356 to 376; these read SESE…IRDG, GQSKQSREDRRSQRQTREEGSDRQSRESDDD, and EYEEELQRERGDRKRGGSGRS. 3 stretches are compositionally biased toward basic and acidic residues: residues 137–224, 275–297, and 356–370; these read RDQR…IRDG, QSREDRRSQRQTREEGSDRQSRE, and EYEEELQRERGDRKR. In terms of domain architecture, Cupin type-1 2 spans 390 to 539; that stretch reads QNVNRPSRAD…SYDISTKEAF (150 aa).

It belongs to the 11S seed storage protein (globulins) family. Hexamer; each subunit is composed of an acidic and a basic chain derived from a single precursor and linked by a disulfide bond. In terms of tissue distribution, expressed only in immature seeds.

Seed storage protein. The chain is 13S globulin seed storage protein 1 (FA02) from Fagopyrum esculentum (Common buckwheat).